The chain runs to 198 residues: Elongation factor Ts (198 aa).

The segment at 82–85 (TDFV) is involved in Mg(2+) ion dislocation from EF-Tu.

It belongs to the EF-Ts family.

Its subcellular location is the cytoplasm. Its function is as follows. Associates with the EF-Tu.GDP complex and induces the exchange of GDP to GTP. It remains bound to the aminoacyl-tRNA.EF-Tu.GTP complex up to the GTP hydrolysis stage on the ribosome. The polypeptide is Elongation factor Ts (Oleidesulfovibrio alaskensis (strain ATCC BAA-1058 / DSM 17464 / G20) (Desulfovibrio alaskensis)).